We begin with the raw amino-acid sequence, 127 residues long: Putative iron-sulfur cluster insertion protein ErpA (127 aa).

Over residues 1–14 (MNTPFNDGSGQTDP) the composition is skewed to polar residues. Residues 1-20 (MNTPFNDGSGQTDPMTDIPT) form a disordered region. Positions 55, 119, and 121 each coordinate iron-sulfur cluster.

It belongs to the HesB/IscA family. In terms of assembly, homodimer. Requires iron-sulfur cluster as cofactor.

Its function is as follows. Required for insertion of 4Fe-4S clusters. The chain is Putative iron-sulfur cluster insertion protein ErpA from Nitrosospira multiformis (strain ATCC 25196 / NCIMB 11849 / C 71).